The following is a 234-amino-acid chain: Carboxy-S-adenosyl-L-methionine synthase (234 aa).

S-adenosyl-L-methionine is bound by residues tyrosine 35, glycine 60 to serine 62, aspartate 109 to valine 110, asparagine 124, and arginine 191.

It belongs to the class I-like SAM-binding methyltransferase superfamily. Cx-SAM synthase family. As to quaternary structure, homodimer.

It catalyses the reaction prephenate + S-adenosyl-L-methionine = carboxy-S-adenosyl-L-methionine + 3-phenylpyruvate + H2O. Its function is as follows. Catalyzes the conversion of S-adenosyl-L-methionine (SAM) to carboxy-S-adenosyl-L-methionine (Cx-SAM). In Campylobacter curvus (strain 525.92), this protein is Carboxy-S-adenosyl-L-methionine synthase.